Reading from the N-terminus, the 133-residue chain is Large ribosomal subunit protein bL20 (133 aa).

The protein belongs to the bacterial ribosomal protein bL20 family.

Binds directly to 23S ribosomal RNA and is necessary for the in vitro assembly process of the 50S ribosomal subunit. It is not involved in the protein synthesizing functions of that subunit. The polypeptide is Large ribosomal subunit protein bL20 (Bartonella tribocorum (strain CIP 105476 / IBS 506)).